We begin with the raw amino-acid sequence, 553 residues long: Protein PALS2 (553 aa).

L27 domains are found at residues 1-48 (MQQV…EDSK) and 49-107 (LEAV…YDSP). The PDZ domain occupies 129-208 (ILGIHKKAGE…SVTLKILPSY (80 aa)). Residues 228-297 (VRQVFVKCHF…PSQFLEEKRK (70 aa)) form the SH3 domain. The Guanylate kinase-like domain maps to 351–538 (RKTLVLIGAQ…AFEKLQTAIE (188 aa)). A Phosphotyrosine modification is found at Tyr513.

It belongs to the MAGUK family. As to quaternary structure, interacts with CADM1. Interacts with the LIN7 proteins.

It is found in the membrane. The polypeptide is Protein PALS2 (Mus musculus (Mouse)).